The following is a 93-amino-acid chain: Cell division topological specificity factor (93 aa).

The protein belongs to the MinE family.

In terms of biological role, prevents the cell division inhibition by proteins MinC and MinD at internal division sites while permitting inhibition at polar sites. This ensures cell division at the proper site by restricting the formation of a division septum at the midpoint of the long axis of the cell. This chain is Cell division topological specificity factor, found in Methylococcus capsulatus (strain ATCC 33009 / NCIMB 11132 / Bath).